Consider the following 830-residue polypeptide: WD repeat-containing protein 75 (830 aa).

WD repeat units follow at residues 4–42, 46–85, 89–130, 144–183, 192–230, 236–275, 278–317, 323–361, and 375–422; these read EGVRVVRCGGSRLNFRRAVFSVDSKYIFCVSGDFVKVYS, EECVHILHGHTDLVSGILVNPSNHLQLYSCSFDGTIKLWD, GILI…QLVS, RQLTFVLDYINRSPKCIAFGNEGEYVAAVRDFYLSVYFFK, LPSTKNKKNAKNKFTCVACHPKEDCIASGHMDGKIRLWR, QKYTYTCLHWHHDMVMDLAFTVTGTSLLSGGRECVLVEWR, SEKNKEFLPRLGSSIEHISVSPAGDLFCTSHSDNKITVIH, SAVIQGLVKDRSISTGLMVDPRTKALVLNGKPGHLQFYS, and QQEY…KLWN. Residue Lys-426 forms a Glycyl lysine isopeptide (Lys-Gly) (interchain with G-Cter in SUMO2) linkage. WD repeat units follow at residues 429–473, 486–524, 528–568, and 573–610; these read GFVL…KVWI, AWTCDFVGSYHKYQATNCCFSEDGSLLAVSFEEIVTIWD, WELK…CCWN, and SIQWSAKLNVRVMEPDPYSDHVAAVAQSSAGSDLFVFK. Ser-663 and Ser-671 each carry phosphoserine. Residue Lys-675 forms a Glycyl lysine isopeptide (Lys-Gly) (interchain with G-Cter in SUMO2) linkage. A disordered region spans residues 761 to 807; sequence KSAEEVPDDVDMEGNKESDDSDEEYDLTEKDKETNNNTDLGEDAIHQ. Residues Ser-778 and Ser-781 each carry the phosphoserine modification. Tyr-785 is subject to Phosphotyrosine. Ser-811 carries the phosphoserine modification.

In terms of assembly, component of the proposed t-UTP subcomplex of the ribosomal small subunit (SSU) processome. SSU processome is composed of more than 70 proteins and the RNA chaperone small nucleolar RNA (snoRNA) U3.

Its subcellular location is the nucleus. It is found in the nucleolus. Ribosome biogenesis factor. Part of the small subunit (SSU) processome, first precursor of the small eukaryotic ribosomal subunit. During the assembly of the SSU processome in the nucleolus, many ribosome biogenesis factors, an RNA chaperone and ribosomal proteins associate with the nascent pre-rRNA and work in concert to generate RNA folding, modifications, rearrangements and cleavage as well as targeted degradation of pre-ribosomal RNA by the RNA exosome. Involved in nucleolar processing of pre-18S ribosomal RNA. Required for optimal pre-ribosomal RNA transcription by RNA polymerase I. The sequence is that of WD repeat-containing protein 75 (Wdr75) from Mus musculus (Mouse).